The primary structure comprises 24 residues: Glutamate dehydrogenase (24 aa).

This sequence belongs to the Glu/Leu/Phe/Val dehydrogenases family. In terms of assembly, homohexamer.

The protein resides in the cytoplasm. The catalysed reaction is L-glutamate + NAD(+) + H2O = 2-oxoglutarate + NH4(+) + NADH + H(+). The enzyme catalyses L-glutamate + NADP(+) + H2O = 2-oxoglutarate + NH4(+) + NADPH + H(+). The protein is Glutamate dehydrogenase (gdhA) of Pyrococcus woesei.